The sequence spans 185 residues: Large ribosomal subunit protein uL5 (185 aa).

It belongs to the universal ribosomal protein uL5 family. As to quaternary structure, part of the 50S ribosomal subunit; part of the 5S rRNA/L5/L18/L25 subcomplex. Contacts the 5S rRNA and the P site tRNA. Forms a bridge to the 30S subunit in the 70S ribosome.

Functionally, this is one of the proteins that bind and probably mediate the attachment of the 5S RNA into the large ribosomal subunit, where it forms part of the central protuberance. In the 70S ribosome it contacts protein S13 of the 30S subunit (bridge B1b), connecting the 2 subunits; this bridge is implicated in subunit movement. Contacts the P site tRNA; the 5S rRNA and some of its associated proteins might help stabilize positioning of ribosome-bound tRNAs. In Parabacteroides distasonis (strain ATCC 8503 / DSM 20701 / CIP 104284 / JCM 5825 / NCTC 11152), this protein is Large ribosomal subunit protein uL5.